Here is a 769-residue protein sequence, read N- to C-terminus: Probable beta-glucosidase M (769 aa).

The signal sequence occupies residues 1–22 (MHSNLGLAGLAGLLATASVCLS). 3 N-linked (GlcNAc...) asparagine glycosylation sites follow: Asn-28, Asn-75, and Asn-262. Asp-290 is an active-site residue. N-linked (GlcNAc...) asparagine glycans are attached at residues Asn-318, Asn-325, Asn-437, and Asn-546.

Belongs to the glycosyl hydrolase 3 family.

The protein resides in the secreted. It carries out the reaction Hydrolysis of terminal, non-reducing beta-D-glucosyl residues with release of beta-D-glucose.. It participates in glycan metabolism; cellulose degradation. Its function is as follows. Beta-glucosidases are one of a number of cellulolytic enzymes involved in the degradation of cellulosic biomass. Catalyzes the last step releasing glucose from the inhibitory cellobiose. The polypeptide is Probable beta-glucosidase M (bglM) (Neosartorya fischeri (strain ATCC 1020 / DSM 3700 / CBS 544.65 / FGSC A1164 / JCM 1740 / NRRL 181 / WB 181) (Aspergillus fischerianus)).